A 485-amino-acid chain; its full sequence is MINASLKELSLALAAKKVSSVELSSLFLDRIERLNPTLNAFVTVDREKSLQMARDADARIAAGTAGPLTGIPIAQKDIFCAEGWLSTCGSKMLANFVSPYDATVIRKMHAEAGLVSLGKTNMDEFAMGSSNETSFFGSVRNPWDTQRVPGGSSGGSAAAVAARLAPAATGTDTGGSIRQPAALCNLTGLKPTYGVVSRYGMIAFASSLDQGGPMAASAEDCALLLNTMVGFDERDSTSLERPVEDYARDLDKPLDGLRIGLPKEFFGEGCDAEVMAAVRAAIAEYEKLGATCVEISLPNSHLSVPAYYVIAPAEASSNLSRFDGVRYGYRAPEYGNLDDMYMKTRAQGFGAEVKRRILIGAYVLSHGYYDAYYLQAQRIRRLIANDFVEAFKHCDVIMSPTSPSTAFKLGEKAADPVQMYLSDIYTIAVNLAGLPGMSIPCGFVGGLPVGLQLIGNYFAENRLLNVAHRYQQATDWHQRRPGGIE.

Catalysis depends on charge relay system residues Lys76 and Ser152. The active-site Acyl-ester intermediate is Ser176.

Belongs to the amidase family. GatA subfamily. Heterotrimer of A, B and C subunits.

It catalyses the reaction L-glutamyl-tRNA(Gln) + L-glutamine + ATP + H2O = L-glutaminyl-tRNA(Gln) + L-glutamate + ADP + phosphate + H(+). In terms of biological role, allows the formation of correctly charged Gln-tRNA(Gln) through the transamidation of misacylated Glu-tRNA(Gln) in organisms which lack glutaminyl-tRNA synthetase. The reaction takes place in the presence of glutamine and ATP through an activated gamma-phospho-Glu-tRNA(Gln). This chain is Glutamyl-tRNA(Gln) amidotransferase subunit A, found in Dechloromonas aromatica (strain RCB).